The sequence spans 313 residues: Sororin-like protein 1 (313 aa).

An FGF motif motif is present at residues Phe-44–Phe-46. A disordered region spans residues Ala-105–Gly-287. Residues Glu-107–Ala-118 are compositionally biased toward polar residues. Over residues Pro-123–Pro-134 the composition is skewed to pro residues. The segment covering Pro-135 to Leu-154 has biased composition (low complexity). Polar residues predominate over residues Gln-155–Pro-170. Positions His-184–Arg-196 are enriched in basic residues. The span at Glu-249–Ala-264 shows a compositional bias: basic and acidic residues. A C-terminal Sororin domain region spans residues Lys-288–Val-310.

This sequence belongs to the sororin family. As to quaternary structure, interacts with Pds5 and Psm3.

It localises to the nucleus. Functionally, regulator of sister chromatid cohesion in mitosis stabilizing cohesin complex association with chromatin. Antagonizes the action of wpl1 which stimulates cohesin dissociation from chromatin. Cohesion ensures that chromosome partitioning is accurate in dividing cells and may play an important role in DNA repair. The protein is Sororin-like protein 1 of Schizosaccharomyces pombe (strain 972 / ATCC 24843) (Fission yeast).